The following is a 178-amino-acid chain: Ribosome maturation factor RimM (178 aa).

Positions 101–178 constitute a PRC barrel domain; that stretch reads ADEYYWYQLV…VMRVEWDADF (78 aa).

It belongs to the RimM family. Binds ribosomal protein uS19.

The protein resides in the cytoplasm. Functionally, an accessory protein needed during the final step in the assembly of 30S ribosomal subunit, possibly for assembly of the head region. Essential for efficient processing of 16S rRNA. May be needed both before and after RbfA during the maturation of 16S rRNA. It has affinity for free ribosomal 30S subunits but not for 70S ribosomes. This is Ribosome maturation factor RimM from Pseudomonas putida (strain ATCC 700007 / DSM 6899 / JCM 31910 / BCRC 17059 / LMG 24140 / F1).